We begin with the raw amino-acid sequence, 464 residues long: Cytoplasmic tRNA 2-thiolation protein 2 (464 aa).

It belongs to the CTU2/NCS2 family.

The protein localises to the cytoplasm. Its pathway is tRNA modification; 5-methoxycarbonylmethyl-2-thiouridine-tRNA biosynthesis. Plays a central role in 2-thiolation of mcm(5)S(2)U at tRNA wobble positions of tRNA(Lys), tRNA(Glu) and tRNA(Gln). May act by forming a heterodimer with NCS6/CTU1 that ligates sulfur from thiocarboxylated URM1 onto the uridine of tRNAs at wobble position. The sequence is that of Cytoplasmic tRNA 2-thiolation protein 2 from Oryza sativa subsp. japonica (Rice).